We begin with the raw amino-acid sequence, 515 residues long: GMP synthase [glutamine-hydrolyzing] (515 aa).

One can recognise a Glutamine amidotransferase type-1 domain in the interval 10–200 (TIIVLDFGSQ…VFGVCGCSEG (191 aa)). The Nucleophile role is filled by cysteine 87. Active-site residues include histidine 174 and glutamate 176. Residues 201–390 (WNMENFIEVE…LGIPDEIVWR (190 aa)) enclose the GMPS ATP-PPase domain. Position 228–234 (228–234 (SGGVDSS)) interacts with ATP.

Homodimer.

The catalysed reaction is XMP + L-glutamine + ATP + H2O = GMP + L-glutamate + AMP + diphosphate + 2 H(+). Its pathway is purine metabolism; GMP biosynthesis; GMP from XMP (L-Gln route): step 1/1. In terms of biological role, catalyzes the synthesis of GMP from XMP. In Bacillus cereus (strain ATCC 14579 / DSM 31 / CCUG 7414 / JCM 2152 / NBRC 15305 / NCIMB 9373 / NCTC 2599 / NRRL B-3711), this protein is GMP synthase [glutamine-hydrolyzing].